The chain runs to 302 residues: UDP-N-acetylenolpyruvoylglucosamine reductase (302 aa).

Residues 29-192 (KVGGPVDLLA…VAVTLQLSED (164 aa)) form the FAD-binding PCMH-type domain. Residue Arg-172 is part of the active site. Ser-221 serves as the catalytic Proton donor. Glu-291 is an active-site residue.

It belongs to the MurB family. The cofactor is FAD.

Its subcellular location is the cytoplasm. The enzyme catalyses UDP-N-acetyl-alpha-D-muramate + NADP(+) = UDP-N-acetyl-3-O-(1-carboxyvinyl)-alpha-D-glucosamine + NADPH + H(+). Its pathway is cell wall biogenesis; peptidoglycan biosynthesis. Functionally, cell wall formation. This chain is UDP-N-acetylenolpyruvoylglucosamine reductase, found in Trichlorobacter lovleyi (strain ATCC BAA-1151 / DSM 17278 / SZ) (Geobacter lovleyi).